Consider the following 78-residue polypeptide: Small ribosomal subunit protein eS17 (78 aa).

This sequence belongs to the eukaryotic ribosomal protein eS17 family.

This is Small ribosomal subunit protein eS17 from Sulfurisphaera tokodaii (strain DSM 16993 / JCM 10545 / NBRC 100140 / 7) (Sulfolobus tokodaii).